Here is a 322-residue protein sequence, read N- to C-terminus: Phosphatidylserine decarboxylase proenzyme (322 aa).

Residues D90, H147, and S254 each act as charge relay system; for autoendoproteolytic cleavage activity in the active site. Catalysis depends on S254, which acts as the Schiff-base intermediate with substrate; via pyruvic acid; for decarboxylase activity. S254 carries the post-translational modification Pyruvic acid (Ser); by autocatalysis.

Belongs to the phosphatidylserine decarboxylase family. PSD-B subfamily. Prokaryotic type I sub-subfamily. As to quaternary structure, heterodimer of a large membrane-associated beta subunit and a small pyruvoyl-containing alpha subunit. Requires pyruvate as cofactor. In terms of processing, is synthesized initially as an inactive proenzyme. Formation of the active enzyme involves a self-maturation process in which the active site pyruvoyl group is generated from an internal serine residue via an autocatalytic post-translational modification. Two non-identical subunits are generated from the proenzyme in this reaction, and the pyruvate is formed at the N-terminus of the alpha chain, which is derived from the carboxyl end of the proenzyme. The autoendoproteolytic cleavage occurs by a canonical serine protease mechanism, in which the side chain hydroxyl group of the serine supplies its oxygen atom to form the C-terminus of the beta chain, while the remainder of the serine residue undergoes an oxidative deamination to produce ammonia and the pyruvoyl prosthetic group on the alpha chain. During this reaction, the Ser that is part of the protease active site of the proenzyme becomes the pyruvoyl prosthetic group, which constitutes an essential element of the active site of the mature decarboxylase.

It localises to the cell membrane. The catalysed reaction is a 1,2-diacyl-sn-glycero-3-phospho-L-serine + H(+) = a 1,2-diacyl-sn-glycero-3-phosphoethanolamine + CO2. Its pathway is phospholipid metabolism; phosphatidylethanolamine biosynthesis; phosphatidylethanolamine from CDP-diacylglycerol: step 2/2. Functionally, catalyzes the formation of phosphatidylethanolamine (PtdEtn) from phosphatidylserine (PtdSer). The sequence is that of Phosphatidylserine decarboxylase proenzyme from Shigella dysenteriae serotype 1 (strain Sd197).